A 132-amino-acid chain; its full sequence is Small ribosomal subunit protein bS6 (132 aa).

Residues 99–132 (ASPMVKAKDERRGDRREDFANETADDADAGDSEE) form a disordered region. The span at 104–117 (KAKDERRGDRREDF) shows a compositional bias: basic and acidic residues. Residues 121–132 (TADDADAGDSEE) are compositionally biased toward acidic residues.

This sequence belongs to the bacterial ribosomal protein bS6 family.

In terms of biological role, binds together with bS18 to 16S ribosomal RNA. The sequence is that of Small ribosomal subunit protein bS6 from Serratia proteamaculans (strain 568).